The following is a 78-amino-acid chain: RNA-binding protein KhpA (78 aa).

A KH domain is found at 29–78 (TIIYELTVAKGDIGKIIGKEGRTIKAIRTLLVSVASRDNVKVSLEIMEER).

It belongs to the KhpA RNA-binding protein family.

Its subcellular location is the cytoplasm. Its function is as follows. A probable RNA-binding protein. The polypeptide is RNA-binding protein KhpA (Chlamydia trachomatis serovar D (strain ATCC VR-885 / DSM 19411 / UW-3/Cx)).